The following is a 450-amino-acid chain: ATP-dependent protease ATPase subunit HslU (450 aa).

ATP contacts are provided by residues Val29, Gly71–Glu76, Asp261, Glu328, and Arg400.

It belongs to the ClpX chaperone family. HslU subfamily. In terms of assembly, a double ring-shaped homohexamer of HslV is capped on each side by a ring-shaped HslU homohexamer. The assembly of the HslU/HslV complex is dependent on binding of ATP.

The protein resides in the cytoplasm. ATPase subunit of a proteasome-like degradation complex; this subunit has chaperone activity. The binding of ATP and its subsequent hydrolysis by HslU are essential for unfolding of protein substrates subsequently hydrolyzed by HslV. HslU recognizes the N-terminal part of its protein substrates and unfolds these before they are guided to HslV for hydrolysis. The chain is ATP-dependent protease ATPase subunit HslU from Rickettsia prowazekii (strain Madrid E).